A 265-amino-acid polypeptide reads, in one-letter code: Shikimate dehydrogenase (NADP(+)) (265 aa).

Residues 14–16 (SLS) and T61 contribute to the shikimate site. K65 serves as the catalytic Proton acceptor. Positions 85 and 100 each coordinate shikimate. NADP(+)-binding positions include 123–127 (GAGGA), 146–151 (NRTESK), and A209. Residue Y211 participates in shikimate binding. G232 serves as a coordination point for NADP(+).

It belongs to the shikimate dehydrogenase family. In terms of assembly, homodimer.

The enzyme catalyses shikimate + NADP(+) = 3-dehydroshikimate + NADPH + H(+). It functions in the pathway metabolic intermediate biosynthesis; chorismate biosynthesis; chorismate from D-erythrose 4-phosphate and phosphoenolpyruvate: step 4/7. In terms of biological role, involved in the biosynthesis of the chorismate, which leads to the biosynthesis of aromatic amino acids. Catalyzes the reversible NADPH linked reduction of 3-dehydroshikimate (DHSA) to yield shikimate (SA). This chain is Shikimate dehydrogenase (NADP(+)), found in Haloarcula marismortui (strain ATCC 43049 / DSM 3752 / JCM 8966 / VKM B-1809) (Halobacterium marismortui).